The following is a 625-amino-acid chain: 1-deoxy-D-xylulose-5-phosphate synthase (625 aa).

Thiamine diphosphate-binding positions include histidine 80 and 121 to 123 (GHS). Aspartate 152 contacts Mg(2+). Thiamine diphosphate is bound by residues 153–154 (GA), asparagine 181, tyrosine 290, and glutamate 371. Asparagine 181 contributes to the Mg(2+) binding site.

The protein belongs to the transketolase family. DXPS subfamily. As to quaternary structure, homodimer. Requires Mg(2+) as cofactor. Thiamine diphosphate serves as cofactor.

It carries out the reaction D-glyceraldehyde 3-phosphate + pyruvate + H(+) = 1-deoxy-D-xylulose 5-phosphate + CO2. It functions in the pathway metabolic intermediate biosynthesis; 1-deoxy-D-xylulose 5-phosphate biosynthesis; 1-deoxy-D-xylulose 5-phosphate from D-glyceraldehyde 3-phosphate and pyruvate: step 1/1. Its function is as follows. Catalyzes the acyloin condensation reaction between C atoms 2 and 3 of pyruvate and glyceraldehyde 3-phosphate to yield 1-deoxy-D-xylulose-5-phosphate (DXP). This Haemophilus influenzae (strain 86-028NP) protein is 1-deoxy-D-xylulose-5-phosphate synthase.